Reading from the N-terminus, the 393-residue chain is uncharacterized protein (393 aa).

The B box-type zinc-finger motif lies at 6–47 (KYDNKCAIHKEHKIKMICATCKDVVCNECILLDHNGHKFGRI). Zn(2+) contacts are provided by cysteine 11, histidine 14, cysteine 34, and histidine 39.

This is an uncharacterized protein from Dictyostelium discoideum (Social amoeba).